A 32-amino-acid polypeptide reads, in one-letter code: Cathepsin B-like cysteine proteinase (32 aa).

Residues 1 to 22 constitute a propeptide, activation peptide; the sequence is KPNYKRQFEPFSDELIHYINLE.

This sequence belongs to the peptidase C1 family.

In terms of biological role, thiol protease. This Fasciola hepatica (Liver fluke) protein is Cathepsin B-like cysteine proteinase.